Here is a 195-residue protein sequence, read N- to C-terminus: Peptidyl-tRNA hydrolase (195 aa).

A tRNA-binding site is contributed by Y17. Catalysis depends on H22, which acts as the Proton acceptor. 3 residues coordinate tRNA: Y68, N70, and N116.

Belongs to the PTH family. As to quaternary structure, monomer.

It is found in the cytoplasm. It carries out the reaction an N-acyl-L-alpha-aminoacyl-tRNA + H2O = an N-acyl-L-amino acid + a tRNA + H(+). In terms of biological role, hydrolyzes ribosome-free peptidyl-tRNAs (with 1 or more amino acids incorporated), which drop off the ribosome during protein synthesis, or as a result of ribosome stalling. Its function is as follows. Catalyzes the release of premature peptidyl moieties from peptidyl-tRNA molecules trapped in stalled 50S ribosomal subunits, and thus maintains levels of free tRNAs and 50S ribosomes. The sequence is that of Peptidyl-tRNA hydrolase from Shewanella putrefaciens (strain CN-32 / ATCC BAA-453).